Consider the following 112-residue polypeptide: Divalent-cation tolerance protein CutA (112 aa).

Residues Cys16, His83, and His84 each contribute to the Cu cation site.

It belongs to the CutA family. As to quaternary structure, homotrimer. The cofactor is Cu cation.

It is found in the cytoplasm. Functionally, involved in resistance toward heavy metals. This chain is Divalent-cation tolerance protein CutA, found in Escherichia coli O81 (strain ED1a).